A 102-amino-acid polypeptide reads, in one-letter code: Small ribosomal subunit protein uS10 (102 aa).

Belongs to the universal ribosomal protein uS10 family. As to quaternary structure, part of the 30S ribosomal subunit.

Functionally, involved in the binding of tRNA to the ribosomes. This chain is Small ribosomal subunit protein uS10, found in Leuconostoc citreum (strain KM20).